The primary structure comprises 219 residues: Vesicle-associated membrane protein 712 (219 aa).

At 1–189 (MSILYALVAR…NNTVWWRNCK (189 aa)) the chain is on the cytoplasmic side. The 105-residue stretch at 7–111 (LVARGTVVLA…AMNDEFSRVL (105 aa)) folds into the Longin domain. Residues 126–186 (TISRIKGEMN…RRFNNTVWWR (61 aa)) enclose the v-SNARE coiled-coil homology domain. A helical; Anchor for type IV membrane protein membrane pass occupies residues 190–210 (LTLLLILVLLVIIYIGVAFAC). Over 211–219 (HGPTLPSCV) the chain is Vesicular.

It belongs to the synaptobrevin family. In terms of tissue distribution, expressed in flowers, leaves, stems and roots.

It is found in the vacuole membrane. The protein resides in the prevacuolar compartment membrane. In terms of biological role, involved in the targeting and/or fusion of transport vesicles to their target membrane. The chain is Vesicle-associated membrane protein 712 from Arabidopsis thaliana (Mouse-ear cress).